We begin with the raw amino-acid sequence, 447 residues long: uncharacterized protein (447 aa).

2 consecutive transmembrane segments (helical) span residues 380–400 (VLEI…LLLT) and 412–432 (ILGF…GVYV).

Its subcellular location is the cell membrane. This is an uncharacterized protein from Methanocaldococcus jannaschii (strain ATCC 43067 / DSM 2661 / JAL-1 / JCM 10045 / NBRC 100440) (Methanococcus jannaschii).